Consider the following 659-residue polypeptide: QWRF motif-containing protein 2 (659 aa).

Disordered stretches follow at residues 1–125 (MVAA…SVTV), 157–221 (SKKK…LDCG), 291–317 (DTDSVSSGSTNGVQECGSGVNGEISKS), 340–359 (RLQDPGSPLSSSPGLKTSSI), and 371–429 (SDAV…NAYN). Residues 42–72 (SPSPSHSVSSTTTTTTTTTTTTSSSSSSSSS) are compositionally biased toward low complexity. A compositionally biased stretch (polar residues) spans 90 to 102 (RSTTNSASNSIKT). Positions 172–190 (STPERRRSTPVRDQRENSK) are enriched in basic and acidic residues. 2 stretches are compositionally biased toward polar residues: residues 206–216 (SESVVPNSLSR) and 291–303 (DTDSVSSGSTNGV). Composition is skewed to low complexity over residues 345 to 359 (GSPLSSSPGLKTSSI) and 401 to 418 (ATTTSSPARALSSPSRAR). The QWRF motif motif lies at 468-471 (QWRF).

This sequence belongs to the QWRF family.

This Arabidopsis thaliana (Mouse-ear cress) protein is QWRF motif-containing protein 2 (QWRF2).